A 470-amino-acid polypeptide reads, in one-letter code: uncharacterized protein (470 aa).

The signal sequence occupies residues 1–24 (MKKLVGSLAAISVLSATGFSYVGY).

This is an uncharacterized protein from Mycoplasma capricolum subsp. capricolum (strain California kid / ATCC 27343 / NCTC 10154).